Here is a 126-residue protein sequence, read N- to C-terminus: MNELGRHILAEIYGCDGEILNNKDFIEKIMVDSALKAGAEVREVAFHKFSPQGISGVVIISESHLTIHTWPELGYAAVDVFTCGDRINPWDACNYMTEKFNAKNMTATEIKRGIFEQVVEVKASNI.

Ser-63 serves as the catalytic Schiff-base intermediate with substrate; via pyruvic acid. Ser-63 carries the post-translational modification Pyruvic acid (Ser); by autocatalysis. Residue His-68 is the Proton acceptor; for processing activity of the active site. Cys-83 acts as the Proton donor; for catalytic activity in catalysis.

The protein belongs to the prokaryotic AdoMetDC family. Type 1 subfamily. As to quaternary structure, heterotetramer of two alpha and two beta chains arranged as a dimer of alpha/beta heterodimers. Pyruvate is required as a cofactor. Post-translationally, is synthesized initially as an inactive proenzyme. Formation of the active enzyme involves a self-maturation process in which the active site pyruvoyl group is generated from an internal serine residue via an autocatalytic post-translational modification. Two non-identical subunits are generated from the proenzyme in this reaction, and the pyruvate is formed at the N-terminus of the alpha chain, which is derived from the carboxyl end of the proenzyme. The post-translation cleavage follows an unusual pathway, termed non-hydrolytic serinolysis, in which the side chain hydroxyl group of the serine supplies its oxygen atom to form the C-terminus of the beta chain, while the remainder of the serine residue undergoes an oxidative deamination to produce ammonia and the pyruvoyl group blocking the N-terminus of the alpha chain.

The catalysed reaction is S-adenosyl-L-methionine + H(+) = S-adenosyl 3-(methylsulfanyl)propylamine + CO2. It functions in the pathway amine and polyamine biosynthesis; S-adenosylmethioninamine biosynthesis; S-adenosylmethioninamine from S-adenosyl-L-methionine: step 1/1. Functionally, catalyzes the decarboxylation of S-adenosylmethionine to S-adenosylmethioninamine (dcAdoMet), the propylamine donor required for the synthesis of the polyamines spermine and spermidine from the diamine putrescine. The chain is S-adenosylmethionine decarboxylase proenzyme from Clostridium kluyveri (strain NBRC 12016).